The following is a 127-amino-acid chain: Aspartate 1-decarboxylase (127 aa).

The active-site Schiff-base intermediate with substrate; via pyruvic acid is the serine 25. Serine 25 is subject to Pyruvic acid (Ser). Threonine 57 contributes to the substrate binding site. The active-site Proton donor is the tyrosine 58. 73-75 (GAA) provides a ligand contact to substrate.

It belongs to the PanD family. As to quaternary structure, heterooctamer of four alpha and four beta subunits. It depends on pyruvate as a cofactor. Post-translationally, is synthesized initially as an inactive proenzyme, which is activated by self-cleavage at a specific serine bond to produce a beta-subunit with a hydroxyl group at its C-terminus and an alpha-subunit with a pyruvoyl group at its N-terminus.

Its subcellular location is the cytoplasm. It catalyses the reaction L-aspartate + H(+) = beta-alanine + CO2. Its pathway is cofactor biosynthesis; (R)-pantothenate biosynthesis; beta-alanine from L-aspartate: step 1/1. Functionally, catalyzes the pyruvoyl-dependent decarboxylation of aspartate to produce beta-alanine. In Clostridium botulinum (strain Loch Maree / Type A3), this protein is Aspartate 1-decarboxylase.